A 602-amino-acid chain; its full sequence is Elongation factor 4 (602 aa).

Residues 7–189 (SKIRNFCIIA…AIVRRVPPPQ (183 aa)) enclose the tr-type G domain. GTP is bound by residues 19 to 24 (DHGKST) and 136 to 139 (NKVD).

This sequence belongs to the TRAFAC class translation factor GTPase superfamily. Classic translation factor GTPase family. LepA subfamily.

It localises to the cell inner membrane. It catalyses the reaction GTP + H2O = GDP + phosphate + H(+). In terms of biological role, required for accurate and efficient protein synthesis under certain stress conditions. May act as a fidelity factor of the translation reaction, by catalyzing a one-codon backward translocation of tRNAs on improperly translocated ribosomes. Back-translocation proceeds from a post-translocation (POST) complex to a pre-translocation (PRE) complex, thus giving elongation factor G a second chance to translocate the tRNAs correctly. Binds to ribosomes in a GTP-dependent manner. The chain is Elongation factor 4 from Prochlorococcus marinus (strain MIT 9301).